A 156-amino-acid polypeptide reads, in one-letter code: Bursicon (156 aa).

Positions 1 to 26 are cleaved as a signal peptide; it reads MYALDFLFIAFVYFAACHIQEKPVRA. Disulfide bonds link cysteine 37-cysteine 86, cysteine 51-cysteine 100, cysteine 61-cysteine 121, cysteine 65-cysteine 123, and cysteine 83-cysteine 126. The CTCK domain occupies 37–127; that stretch reads CQMTPVIHIL…PLECMCRPCG (91 aa).

In terms of assembly, heterodimer of burs and pburs.

It is found in the secreted. Its function is as follows. Final heterodimeric neurohormone released at the end of the molting cycle, involved in the sclerotization (tanning) of the insect cuticle, melanization and wing spreading. The sequence is that of Bursicon from Manduca sexta (Tobacco hawkmoth).